Consider the following 186-residue polypeptide: Ribosome-recycling factor (186 aa).

Belongs to the RRF family.

Its subcellular location is the cytoplasm. Responsible for the release of ribosomes from messenger RNA at the termination of protein biosynthesis. May increase the efficiency of translation by recycling ribosomes from one round of translation to another. In Bartonella henselae (strain ATCC 49882 / DSM 28221 / CCUG 30454 / Houston 1) (Rochalimaea henselae), this protein is Ribosome-recycling factor.